A 30-amino-acid chain; its full sequence is Cyclotide hyen-G (30 aa).

Residues 1-30 (GLPCGESCVYIPCISTVLGCSCSNKVCYRD) constitute a cross-link (cyclopeptide (Gly-Asp)). Intrachain disulfides connect cysteine 4-cysteine 20, cysteine 8-cysteine 22, and cysteine 13-cysteine 27.

In terms of processing, this is a cyclic peptide. As to expression, detected in stems (at protein level).

Functionally, probably participates in a plant defense mechanism. This chain is Cyclotide hyen-G, found in Pigea enneasperma (Spade flower).